Reading from the N-terminus, the 169-residue chain is Large ribosomal subunit protein uL10 (169 aa).

The protein belongs to the universal ribosomal protein uL10 family. As to quaternary structure, part of the ribosomal stalk of the 50S ribosomal subunit. The N-terminus interacts with L11 and the large rRNA to form the base of the stalk. The C-terminus forms an elongated spine to which L12 dimers bind in a sequential fashion forming a multimeric L10(L12)X complex.

Its function is as follows. Forms part of the ribosomal stalk, playing a central role in the interaction of the ribosome with GTP-bound translation factors. The chain is Large ribosomal subunit protein uL10 from Rickettsia rickettsii (strain Iowa).